A 1028-amino-acid polypeptide reads, in one-letter code: Unconventional myosin-Ic (1028 aa).

M1 bears the N-acetylmethionine mark. Positions G12–E696 constitute a Myosin motor domain. ATP contacts are provided by residues N53, Y61, S104 to E113, and N157 to S161. K348 carries the N6-methyllysine modification. The interval L573–D595 is actin-binding. 2 consecutive IQ domains span residues K699–E728 and M722–V751. The region spanning K850–R1024 is the TH1 domain.

Belongs to the TRAFAC class myosin-kinesin ATPase superfamily. Myosin family. Interacts (via its IQ motifs) with calmodulin. Expressed in brain and the sacculus of the internal ear.

It localises to the cytoplasm. It is found in the cell membrane. The protein localises to the cell projection. The protein resides in the ruffle membrane. Its subcellular location is the cytoplasmic vesicle. It localises to the stereocilium membrane. Its function is as follows. Myosins are actin-based motor molecules with ATPase activity. Unconventional myosins serve in intracellular movements. Their highly divergent tails are presumed to bind to membranous compartments, which would be moved relative to actin filaments. This Aquarana catesbeiana (American bullfrog) protein is Unconventional myosin-Ic (Myo1c).